Here is a 945-residue protein sequence, read N- to C-terminus: Leucine--tRNA ligase (945 aa).

Positions 43-53 match the 'HIGH' region motif; the sequence is PYPNGAIHIGH. Residues 638 to 642 carry the 'KMSKS' region motif; sequence KMSKS. Lysine 641 lines the ATP pocket.

It belongs to the class-I aminoacyl-tRNA synthetase family.

It localises to the cytoplasm. The catalysed reaction is tRNA(Leu) + L-leucine + ATP = L-leucyl-tRNA(Leu) + AMP + diphosphate. This Pyrobaculum neutrophilum (strain DSM 2338 / JCM 9278 / NBRC 100436 / V24Sta) (Thermoproteus neutrophilus) protein is Leucine--tRNA ligase.